The primary structure comprises 236 residues: MATTHLDVCAVVPAAGFGRRMQTECPKQYLSIGNQTILEHSVHALLAHPRVKRVVIAISPGDSRFAQLPLANHPRITVVDGGEERADSVLAGLKAAGDAQWVLVHDAARPCLHQDDLARLLALSETSRTGGILAAPVRDTMKRAEPGKNAIAHTVDRNGLWHALTPQFFPRELLHDCLTRALNEGATITDEASALEYCGFHPQLVEGRADNIKVTRPEDLALAEFYLTRTIHQENT.

The protein belongs to the IspD/TarI cytidylyltransferase family. IspD subfamily. Homodimer.

The enzyme catalyses 2-C-methyl-D-erythritol 4-phosphate + CTP + H(+) = 4-CDP-2-C-methyl-D-erythritol + diphosphate. The protein operates within isoprenoid biosynthesis; isopentenyl diphosphate biosynthesis via DXP pathway; isopentenyl diphosphate from 1-deoxy-D-xylulose 5-phosphate: step 2/6. Functionally, catalyzes the formation of 4-diphosphocytidyl-2-C-methyl-D-erythritol from CTP and 2-C-methyl-D-erythritol 4-phosphate (MEP). This Escherichia coli O45:K1 (strain S88 / ExPEC) protein is 2-C-methyl-D-erythritol 4-phosphate cytidylyltransferase.